The following is a 782-amino-acid chain: Lysosome membrane protein 2-C (782 aa).

At 1 to 7 (MVANNKG) the chain is on the cytoplasmic side. A helical transmembrane segment spans residues 8 to 28 (LLIAGLLLSVIGAALFVISLA). At 29-739 (LLPSVLNVAT…QQFKQIQTVK (711 aa)) the chain is on the lumenal side. Asn-77, Asn-105, Asn-191, Asn-219, Asn-234, Asn-243, Asn-281, Asn-368, Asn-387, Asn-401, Asn-427, Asn-432, Asn-451, Asn-465, Asn-501, Asn-536, Asn-540, Asn-595, Asn-605, Asn-613, Asn-646, and Asn-692 each carry an N-linked (GlcNAc...) asparagine glycan. A helical transmembrane segment spans residues 740 to 760 (IAPVVVVSIFGGILLIAGLVM). The Cytoplasmic portion of the chain corresponds to 761–782 (AINGFRKTFYNNNQYNGYNIIN). A Tyrosine-type lysosomal sorting signal motif is present at residues 777–781 (GYNII).

This sequence belongs to the CD36 family. Heavily glycosylated.

The protein localises to the lysosome membrane. Functionally, may act as a lysosomal receptor. May be involved role in macropinocytosis and fluid phase exocytosis. The chain is Lysosome membrane protein 2-C (lmpC) from Dictyostelium discoideum (Social amoeba).